The sequence spans 308 residues: Porphobilinogen deaminase (308 aa).

Cys241 is modified (S-(dipyrrolylmethanemethyl)cysteine).

This sequence belongs to the HMBS family. As to quaternary structure, monomer. The cofactor is dipyrromethane.

It carries out the reaction 4 porphobilinogen + H2O = hydroxymethylbilane + 4 NH4(+). It functions in the pathway porphyrin-containing compound metabolism; protoporphyrin-IX biosynthesis; coproporphyrinogen-III from 5-aminolevulinate: step 2/4. Functionally, tetrapolymerization of the monopyrrole PBG into the hydroxymethylbilane pre-uroporphyrinogen in several discrete steps. The chain is Porphobilinogen deaminase from Staphylococcus aureus (strain Mu50 / ATCC 700699).